Reading from the N-terminus, the 206-residue chain is MLKSLLCILLIFGCLCRIHGVMFHLTPNTQKCLKEDIQANQLVMGEYEVSDVPGQIIDYIARDTKGHILSQKEHITKGKFSFTSEVFDAYEICFISKVPPHQRGISQEVSLVTKKGVETKNYEGIGEASKLKPLEVDLKRLEDLSDSIVRDFAVMRKREEEMRDTNEKTNSRVLFFSIFSMCCLLGLATWQVLYLRRYFKAKKLIE.

An N-terminal signal peptide occupies residues 1–20 (MLKSLLCILLIFGCLCRIHG). Residues 21–172 (VMFHLTPNTQ…RDTNEKTNSR (152 aa)) lie on the Lumenal side of the membrane. In terms of domain architecture, GOLD spans 30-140 (QKCLKEDIQA…LKPLEVDLKR (111 aa)). A helical transmembrane segment spans residues 173–193 (VLFFSIFSMCCLLGLATWQVL). The Cytoplasmic segment spans residues 194-206 (YLRRYFKAKKLIE).

This sequence belongs to the EMP24/GP25L family.

Its subcellular location is the membrane. In terms of biological role, eca and bai are essential, though not redundant, for dorsoventral patterning of the embryo. Specifically required during early embryogenesis for the activity of maternal tkv, while the zygotic tkv is not affected. The sequence is that of Transmembrane emp24 domain-containing protein bai from Drosophila grimshawi (Hawaiian fruit fly).